Reading from the N-terminus, the 249-residue chain is tRNA (guanine-N(1)-)-methyltransferase (249 aa).

S-adenosyl-L-methionine is bound by residues Gly113 and 133 to 138; that span reads IGDFVL.

It belongs to the RNA methyltransferase TrmD family. In terms of assembly, homodimer.

It localises to the cytoplasm. It carries out the reaction guanosine(37) in tRNA + S-adenosyl-L-methionine = N(1)-methylguanosine(37) in tRNA + S-adenosyl-L-homocysteine + H(+). In terms of biological role, specifically methylates guanosine-37 in various tRNAs. This is tRNA (guanine-N(1)-)-methyltransferase from Aliivibrio fischeri (strain ATCC 700601 / ES114) (Vibrio fischeri).